The sequence spans 201 residues: Achaete-scute complex protein T5 (201 aa).

Positions Met1–Val10 are enriched in polar residues. The disordered stretch occupies residues Met1–Arg32. The 67-residue stretch at Pro24–Leu90 folds into the bHLH domain.

Efficient DNA binding requires dimerization with another bHLH protein. In terms of tissue distribution, l(1)SC, SC and AC strongly label the presumptive stomatogastric nervous system, while ASE is more prominent in the presumptive procephalic lobe.

Its function is as follows. AS-C proteins are involved in the determination of the neuronal precursors in the peripheral nervous system and the central nervous system. This chain is Achaete-scute complex protein T5 (ac), found in Drosophila melanogaster (Fruit fly).